A 475-amino-acid polypeptide reads, in one-letter code: Ammonium transporter 2 (475 aa).

11 helical membrane passes run 27-47 (AATLVGLQSMPGLVILYASIV), 55-75 (SAFMALYAFAAVLLCWVLLCY), 120-140 (LVYFQFTFAAITTILVAGSVL), 148-168 (WMAFVPLWLIFSYTVGAYSIW), 183-203 (GGYVIHLSSGVAGFVAAYWVG), 218-238 (VLLMLAGAGLLWMGWSGFNGG), 254-274 (TNLSAATSLLVWTTLDVIFFG), 279-299 (IGAIQGMVTGLAGVTPGAGLI), 302-322 (WAAIIIGVVSGTAPWASMMII), 336-356 (LAVFYTHAVAGLLGGIMTGLF), and 389-409 (AGAAFIAVWNVVSTTIILLAI).

It belongs to the ammonia transporter channel (TC 1.A.11.2) family. As to expression, higher expression in shoots than roots.

The protein localises to the cell membrane. In terms of biological role, high affinity ammonium transporter that may play an important role in moving ammonium between the apoplast and symplast of cells throughout the plant. Does not transport methylammonium. The protein is Ammonium transporter 2 (AMT2) of Arabidopsis thaliana (Mouse-ear cress).